We begin with the raw amino-acid sequence, 96 residues long: uncharacterized protein (96 aa).

It localises to the host cytoplasm. This is an uncharacterized protein from Escherichia phage Mu (Bacteriophage Mu).